The following is a 473-amino-acid chain: Bifunctional protein HldE (473 aa).

Residues 1 to 318 (MKLSMPRFDQ…RAVQREEGSE (318 aa)) are ribokinase. 194–197 (NLGE) provides a ligand contact to ATP. D263 is an active-site residue. The interval 343–473 (FTNGCFDILH…TAIVEKIRKA (131 aa)) is cytidylyltransferase.

The protein in the N-terminal section; belongs to the carbohydrate kinase PfkB family. This sequence in the C-terminal section; belongs to the cytidylyltransferase family. Homodimer.

It catalyses the reaction D-glycero-beta-D-manno-heptose 7-phosphate + ATP = D-glycero-beta-D-manno-heptose 1,7-bisphosphate + ADP + H(+). The catalysed reaction is D-glycero-beta-D-manno-heptose 1-phosphate + ATP + H(+) = ADP-D-glycero-beta-D-manno-heptose + diphosphate. The protein operates within nucleotide-sugar biosynthesis; ADP-L-glycero-beta-D-manno-heptose biosynthesis; ADP-L-glycero-beta-D-manno-heptose from D-glycero-beta-D-manno-heptose 7-phosphate: step 1/4. It functions in the pathway nucleotide-sugar biosynthesis; ADP-L-glycero-beta-D-manno-heptose biosynthesis; ADP-L-glycero-beta-D-manno-heptose from D-glycero-beta-D-manno-heptose 7-phosphate: step 3/4. In terms of biological role, catalyzes the phosphorylation of D-glycero-D-manno-heptose 7-phosphate at the C-1 position to selectively form D-glycero-beta-D-manno-heptose-1,7-bisphosphate. Functionally, catalyzes the ADP transfer from ATP to D-glycero-beta-D-manno-heptose 1-phosphate, yielding ADP-D-glycero-beta-D-manno-heptose. This chain is Bifunctional protein HldE, found in Stutzerimonas stutzeri (strain A1501) (Pseudomonas stutzeri).